Reading from the N-terminus, the 303-residue chain is Tyrosine-protein phosphatase 3 (303 aa).

The Tyrosine-protein phosphatase domain occupies 24–292; the sequence is YMIIEGLNEE…VFLYTVSQEL (269 aa). Cysteine 227 functions as the Phosphocysteine intermediate in the catalytic mechanism.

This sequence belongs to the protein-tyrosine phosphatase family. Non-receptor class subfamily.

It is found in the cytoplasm. It carries out the reaction O-phospho-L-tyrosyl-[protein] + H2O = L-tyrosyl-[protein] + phosphate. Contributes to dephosphorylation of tyrosine 15 of cdc2. The chain is Tyrosine-protein phosphatase 3 (pyp3) from Schizosaccharomyces pombe (strain 972 / ATCC 24843) (Fission yeast).